The primary structure comprises 382 residues: Alcohol dehydrogenase 4 (382 aa).

Belongs to the iron-containing alcohol dehydrogenase family. Homodimer. Requires Zn(2+) as cofactor. Fe(2+) is required as a cofactor.

It is found in the mitochondrion. The enzyme catalyses a primary alcohol + NAD(+) = an aldehyde + NADH + H(+). It catalyses the reaction a secondary alcohol + NAD(+) = a ketone + NADH + H(+). With respect to regulation, inhibited by EDTA. Its function is as follows. Reduces acetaldehyde to ethanol during glucose fermentation. Specific for ethanol. Shows drastically reduced activity towards primary alcohols from 4 carbon atoms upward. Isomers of aliphatic alcohol, as well as secondary alcohols and glycerol are not used at all. This Saccharomyces cerevisiae (strain YJM789) (Baker's yeast) protein is Alcohol dehydrogenase 4 (ADH4).